The sequence spans 21 residues: Nigrocin-2 (21 aa).

Cys-15 and Cys-21 are joined by a disulfide.

Expressed by the skin dorsal glands.

Its subcellular location is the secreted. Its function is as follows. Thanks to its single linear amphipathic alpha-helix, may integrate into membrane phospholipids, leading to lysis of the membrane. Shows antibacterial activity against both Gram-positive and Gram-negative bacteria and against the fungus C.albicans. Has no hemolytic activity. The chain is Nigrocin-2 from Pelophylax nigromaculatus (Black-spotted frog).